The following is a 134-amino-acid chain: Phosphoribosyl-AMP cyclohydrolase (134 aa).

Residue D77 participates in Mg(2+) binding. Position 78 (C78) interacts with Zn(2+). Positions 79 and 81 each coordinate Mg(2+). Zn(2+) is bound by residues C95 and C102.

It belongs to the PRA-CH family. As to quaternary structure, homodimer. Mg(2+) is required as a cofactor. The cofactor is Zn(2+).

It is found in the cytoplasm. The enzyme catalyses 1-(5-phospho-beta-D-ribosyl)-5'-AMP + H2O = 1-(5-phospho-beta-D-ribosyl)-5-[(5-phospho-beta-D-ribosylamino)methylideneamino]imidazole-4-carboxamide. The protein operates within amino-acid biosynthesis; L-histidine biosynthesis; L-histidine from 5-phospho-alpha-D-ribose 1-diphosphate: step 3/9. Catalyzes the hydrolysis of the adenine ring of phosphoribosyl-AMP. In Pseudomonas aeruginosa (strain LESB58), this protein is Phosphoribosyl-AMP cyclohydrolase.